The primary structure comprises 154 residues: Myoglobin (154 aa).

The Globin domain occupies 2–148 (GLSDGEWQLV…FRNDIAAKYK (147 aa)). Ser-4 is subject to Phosphoserine. Residue His-65 coordinates nitrite. His-65 provides a ligand contact to O2. Thr-68 carries the phosphothreonine modification. His-94 provides a ligand contact to heme b.

It belongs to the globin family. In terms of assembly, monomeric.

The protein localises to the cytoplasm. It is found in the sarcoplasm. The enzyme catalyses Fe(III)-heme b-[protein] + nitric oxide + H2O = Fe(II)-heme b-[protein] + nitrite + 2 H(+). It catalyses the reaction H2O2 + AH2 = A + 2 H2O. Its function is as follows. Monomeric heme protein which primary function is to store oxygen and facilitate its diffusion within muscle tissues. Reversibly binds oxygen through a pentacoordinated heme iron and enables its timely and efficient release as needed during periods of heightened demand. Depending on the oxidative conditions of tissues and cells, and in addition to its ability to bind oxygen, it also has a nitrite reductase activity whereby it regulates the production of bioactive nitric oxide. Under stress conditions, like hypoxia and anoxia, it also protects cells against reactive oxygen species thanks to its pseudoperoxidase activity. In Proechimys guairae (Guaira spiny rat), this protein is Myoglobin (MB).